Consider the following 472-residue polypeptide: Ribulose bisphosphate carboxylase large chain (472 aa).

Positions 120 and 170 each coordinate substrate. Lys172 serves as the catalytic Proton acceptor. Residue Lys174 coordinates substrate. 3 residues coordinate Mg(2+): Lys198, Asp200, and Glu201. Lys198 carries the N6-carboxylysine modification. His291 functions as the Proton acceptor in the catalytic mechanism. Residues Arg292, His324, and Ser376 each coordinate substrate. The Interacts with RbcX2 signature appears at Glu461–Glu467.

Belongs to the RuBisCO large chain family. Type I subfamily. In terms of assembly, heterohexadecamer of 8 large chains and 8 small chains; disulfide-linked. The disulfide link is formed within the large subunit homodimers. The exposed C-terminus binds in a cleft in the RbcX2 (shown with endogenous and Anabaena strain CA protein). RbcX2 is displaced by RbcS; as RbcX2 is removed RbcS mediates the ordering of an internal RbcL loop (Thr-64-Leu-70) in a catalytically active conformation. The cofactor is Mg(2+). Post-translationally, the disulfide bond which can form in the large chain dimeric partners within the hexadecamer appears to be associated with oxidative stress and protein turnover.

It is found in the carboxysome. The enzyme catalyses 2 (2R)-3-phosphoglycerate + 2 H(+) = D-ribulose 1,5-bisphosphate + CO2 + H2O. It carries out the reaction D-ribulose 1,5-bisphosphate + O2 = 2-phosphoglycolate + (2R)-3-phosphoglycerate + 2 H(+). Functionally, ruBisCO catalyzes two reactions: the carboxylation of D-ribulose 1,5-bisphosphate, the primary event in carbon dioxide fixation, as well as the oxidative fragmentation of the pentose substrate in the photorespiration process. Both reactions occur simultaneously and in competition at the same active site. This is Ribulose bisphosphate carboxylase large chain (cbbL) from Synechococcus sp. (strain ATCC 27144 / PCC 6301 / SAUG 1402/1) (Anacystis nidulans).